Consider the following 187-residue polypeptide: UPF0340 protein SPD_0576 (187 aa).

It belongs to the UPF0340 family.

In Streptococcus pneumoniae serotype 2 (strain D39 / NCTC 7466), this protein is UPF0340 protein SPD_0576.